The following is a 321-amino-acid chain: Endochitinase 1 (321 aa).

The first 21 residues, 1–21, serve as a signal peptide directing secretion; sequence MSFRALSVFSLFLSYLILGSA. The 43-residue stretch at 22–64 folds into the Chitin-binding type-1 domain; sequence EQCGRQAGGALCPGGLCCSQFGWCGNTDDYCKKENGCQSQCSG. Cystine bridges form between Cys24/Cys39, Cys33/Cys45, Cys38/Cys52, Cys58/Cys62, Cys93/Cys156, Cys167/Cys175, and Cys274/Cys306. Residues 65–98 are hinge; it reads SGGDTGGLDSLITRERFDQMLLHRNDGGCPARGF. Residues 99 to 321 form a catalytic region; the sequence is YTYDAFIAAA…YNNGPSVDSM (223 aa). The Proton donor role is filled by Glu137.

It belongs to the glycosyl hydrolase 19 family. Chitinase class I subfamily.

The protein resides in the vacuole. It carries out the reaction Random endo-hydrolysis of N-acetyl-beta-D-glucosaminide (1-&gt;4)-beta-linkages in chitin and chitodextrins.. Defense against chitin-containing fungal pathogens. The protein is Endochitinase 1 (CHIA1) of Theobroma cacao (Cacao).